Consider the following 143-residue polypeptide: Putative nickel-responsive regulator (143 aa).

Residues His82, His97, His99, and Cys105 each coordinate Ni(2+).

It belongs to the transcriptional regulatory CopG/NikR family. Ni(2+) is required as a cofactor.

In terms of biological role, transcriptional regulator. The polypeptide is Putative nickel-responsive regulator (Helicobacter hepaticus (strain ATCC 51449 / 3B1)).